The chain runs to 521 residues: U4/U6 small nuclear ribonucleoprotein Prp4 (521 aa).

At K26 the chain carries N6-acetyllysine. WD repeat units lie at residues 228 to 267, 270 to 317, 320 to 359, 362 to 401, 404 to 443, 446 to 486, and 489 to 521; these read GDDRPISYCHFSPNSKMLATACWSGLCKLWSVPDCNLLHT, GHNT…PVAD, GHTVRVARVMWHPSGRFLGTTCYDRSWRLWDLEAQEEILH, GHSMGVYDIAFHQDGSLAGTGGLDAFGRVWDLRTGRCIMF, GHLKEIYGINFSPNGYHIATGSGDNTCKVWDLRQRRCVYT, AHQN…PLKT, and GHEGKVMGLDISSDGQLIATCSYDRTFKLWMAE.

In terms of assembly, component of the precatalytic spliceosome (spliceosome B complex). Component of the U4/U6-U5 tri-snRNP complex, a building block of the precatalytic spliceosome (spliceosome B complex). The U4/U6-U5 tri-snRNP complex is composed of the U4, U6 and U5 snRNAs and at least PRPF3, PRPF4, PRPF6, PRPF8, PRPF31, SNRNP200, TXNL4A, SNRNP40, SNRPB, SNRPD1, SNRPD2, SNRPD3, SNRPE, SNRPF, SNRPG, DDX23, CD2BP2, PPIH, SNU13, EFTUD2, SART1 and USP39, plus LSM2, LSM3, LSM4, LSM5, LSM6, LSM7 and LSM8. Interacts directly with PRPF18, PPIH and PRPF3. Part of a heteromeric complex containing PPIH, PRPF3 and PRPF4 that is stable in the absence of RNA. Interacts with ERCC6.

It localises to the nucleus. The protein resides in the nucleus speckle. Functionally, plays a role in pre-mRNA splicing as component of the U4/U6-U5 tri-snRNP complex that is involved in spliceosome assembly, and as component of the precatalytic spliceosome (spliceosome B complex). This Pongo abelii (Sumatran orangutan) protein is U4/U6 small nuclear ribonucleoprotein Prp4 (PRPF4).